The primary structure comprises 125 residues: Cu-Zn superoxide dismutase-like protein (125 aa).

An intrachain disulfide couples Cys-52 to Cys-102.

Belongs to the Cu-Zn superoxide dismutase family.

The protein resides in the host cytoplasm. Virion protein with no enzymatic activity. The protein is Cu-Zn superoxide dismutase-like protein of Bos taurus (Bovine).